Consider the following 147-residue polypeptide: Spermidine export protein MdtJ (147 aa).

4 helical membrane passes run M1–M21, T31–V51, V54–F74, and E81–V101. The span at T105–N117 shows a compositional bias: basic residues. The tract at residues T105 to A147 is disordered.

The protein belongs to the drug/metabolite transporter (DMT) superfamily. Small multidrug resistance (SMR) (TC 2.A.7.1) family. MdtJ subfamily. As to quaternary structure, forms a complex with MdtI.

The protein localises to the cell inner membrane. Functionally, catalyzes the excretion of spermidine. The chain is Spermidine export protein MdtJ from Yersinia pseudotuberculosis serotype IB (strain PB1/+).